The primary structure comprises 318 residues: Protein W (318 aa).

Disordered stretches follow at residues 1-23 (MDQD…GGRE) and 38-318 (SEPT…KKGA). The segment covering 7-20 (ILKEDSEVEREAPG) has biased composition (basic and acidic residues). The segment covering 50–59 (LHNTINTPQG) has biased composition (polar residues). Ser68 carries the post-translational modification Phosphoserine; by host. Over residues 83–101 (RSGEESRVSGRTSKPEAEA) the composition is skewed to basic and acidic residues. Phosphoserine; by host is present on Ser125. Over residues 150-168 (GIEDENREMAAHPDKRGED) the composition is skewed to basic and acidic residues. Positions 191-206 (ASNNGRSMEPGSSHSA) are enriched in polar residues. Residues Ser192, Ser249, Ser257, and Ser260 each carry the phosphoserine; by host modification.

The chain is Protein W (P/V/C) from Sendai virus (strain Harris) (SeV).